A 609-amino-acid chain; its full sequence is MADPSSFASPEKFNIKHMHLKLHVDFTSRAIAASTSLTVRSLQDSLASLILDTKDLTIKKVAVNGKDATFALGTTHSFKGTPLEITLPFSLTRGQEVIVEIDSVTSPKSSALQWLNKEQTAGKIHPYLFSQCQATHCRSIIPCQDTPSVKFTYYSQVSVPKELMALMSALRDGELSEQSDSNRKIYRFKQNVPIPSYLIALVVGALEGRKVGPRTTIWTEKELLEPSVYEFAETEKMLKYAEDLAGPYVWGQYDLLILPPSFPYGGMENPCLTFVTPTVLAGDRSLASVIAHEISHSWTGNLVTNETWENFWLNEGHTVYLERRIDGRLYGEEFRQFKALGGWKELQNSVNTFGATNPLTNLVPNLHEVDVDAAFSSVPYEKGFALLFYLEQLLGGPEIFLGFLKSYIQMFAFKSVTTEEWKKFLYSYFKDKVDILDKVDWKGWMHTPGMPPVQPKYDMTLANACITLGQKWVKATESDLGSFSADDVKDLSSHQLIEVLAILLLEKPLPVSHVKRMQEVYNLNDVKNSEIRFRWLRLCIRAGWEDVIPLALAMATEQGRMKFTRPLYRDLYNFEKAREQTVNTFLKNRSFMHPVTEMLVAKDLHISAS.

A peptide is bound by residues 131 to 133 and 263 to 268; these read QCQ and PYGGME. His292 contacts Zn(2+). The active-site Proton acceptor is the Glu293. 2 residues coordinate Zn(2+): His296 and Glu315. The active-site Proton donor is Tyr380. An a peptide-binding site is contributed by 560–562; the sequence is RMK.

It belongs to the peptidase M1 family. Homodimer. It depends on Zn(2+) as a cofactor. In terms of tissue distribution, expressed in oocytes.

Its subcellular location is the cytoplasm. The catalysed reaction is Release of the N-terminal residue from a tripeptide.. It carries out the reaction leukotriene A4 + H2O = leukotriene B4. Its pathway is lipid metabolism; leukotriene B4 biosynthesis. The epoxide hydrolase activity is mildly restrained by suicide inactivation, possibly involving binding of LTA4 to Tyr-380. Functionally, bifunctional zinc metalloenzyme that comprises both epoxide hydrolase (EH) and aminopeptidase activities. Acts as an epoxide hydrolase to catalyze the conversion of leukotriene A4 (LTA4) to the pro-inflammatory mediator leukotriene B4 (LTB4). During the conversion of LTA4 to LTB4, a second product is formed, the isomeric delta6-trans-delta8-cis-LTB4 (5S,12R-dihydroxy-6,10-trans-8,14-cis-eicosatetraenoic acid), with a relative formation of 10% delta6-trans-delta8-cis-LTB4 compared to 90% LTB4. The production of delta6-trans-delta8-cis-LTB4 seems to depend on the phenylalanine residue at position 375. Also has aminopeptidase activity. The chain is Leukotriene A-4 hydrolase from Xenopus laevis (African clawed frog).